The chain runs to 296 residues: Nucleotide-binding protein Rmet_0297 (296 aa).

ATP is bound at residue 8–15 (GISGSGKS). 57 to 60 (DIRS) serves as a coordination point for GTP.

It belongs to the RapZ-like family.

In terms of biological role, displays ATPase and GTPase activities. In Cupriavidus metallidurans (strain ATCC 43123 / DSM 2839 / NBRC 102507 / CH34) (Ralstonia metallidurans), this protein is Nucleotide-binding protein Rmet_0297.